Reading from the N-terminus, the 495-residue chain is UDP-N-acetylmuramoyl-L-alanyl-D-glutamate--2,6-diaminopimelate ligase (495 aa).

Residues leucine 27, serine 29, and 44–46 (HQA) contribute to the UDP-N-acetyl-alpha-D-muramoyl-L-alanyl-D-glutamate site. 116–122 (GTNGKTT) provides a ligand contact to ATP. Residues asparagine 157, 158–159 (TT), serine 185, glutamine 191, and arginine 193 each bind UDP-N-acetyl-alpha-D-muramoyl-L-alanyl-D-glutamate. Lysine 225 bears the N6-carboxylysine mark. Meso-2,6-diaminopimelate contacts are provided by residues arginine 390, 414 to 417 (DNPR), glycine 465, and glutamate 469. The short motif at 414–417 (DNPR) is the Meso-diaminopimelate recognition motif element.

The protein belongs to the MurCDEF family. MurE subfamily. It depends on Mg(2+) as a cofactor. Carboxylation is probably crucial for Mg(2+) binding and, consequently, for the gamma-phosphate positioning of ATP.

Its subcellular location is the cytoplasm. It catalyses the reaction UDP-N-acetyl-alpha-D-muramoyl-L-alanyl-D-glutamate + meso-2,6-diaminopimelate + ATP = UDP-N-acetyl-alpha-D-muramoyl-L-alanyl-gamma-D-glutamyl-meso-2,6-diaminopimelate + ADP + phosphate + H(+). It functions in the pathway cell wall biogenesis; peptidoglycan biosynthesis. Its function is as follows. Catalyzes the addition of meso-diaminopimelic acid to the nucleotide precursor UDP-N-acetylmuramoyl-L-alanyl-D-glutamate (UMAG) in the biosynthesis of bacterial cell-wall peptidoglycan. This chain is UDP-N-acetylmuramoyl-L-alanyl-D-glutamate--2,6-diaminopimelate ligase, found in Escherichia coli O6:H1 (strain CFT073 / ATCC 700928 / UPEC).